Consider the following 360-residue polypeptide: DNA replication and repair protein RecF (360 aa).

Residue 30 to 37 (GQNGSGKT) coordinates ATP.

It belongs to the RecF family.

The protein resides in the cytoplasm. Functionally, the RecF protein is involved in DNA metabolism; it is required for DNA replication and normal SOS inducibility. RecF binds preferentially to single-stranded, linear DNA. It also seems to bind ATP. This Shewanella baltica (strain OS223) protein is DNA replication and repair protein RecF.